A 516-amino-acid chain; its full sequence is Sodium channel protein Nach (516 aa).

The Cytoplasmic segment spans residues 1-49 (MGHEEELSPEQVDLKVSPLMGSLKRTWNDFCATSSIHGLRYTRDEDTNR). The chain crosses the membrane as a helical span at residues 50-70 (IVHFVWLLISLVMFICAVVMA). Topologically, residues 71–452 (RTFYIDFRSN…LVSNLGSAFS (382 aa)) are extracellular. Residues Asn128, Asn165, Asn220, and Asn348 are each glycosylated (N-linked (GlcNAc...) asparagine). A helical transmembrane segment spans residues 453-473 (LFVGMSMLSVVEIMYYFSVIL). Residues 474-516 (RKNYVLECEARKKMLHKGPKFAWPKANDSHSKHQKSVFIIHKM) are Cytoplasmic-facing.

This sequence belongs to the amiloride-sensitive sodium channel (TC 1.A.6) family.

It is found in the membrane. In terms of biological role, part of a complex that plays a role in tracheal liquid clearance. Probable role in sodium transport. The sequence is that of Sodium channel protein Nach (Nach) from Drosophila ananassae (Fruit fly).